The following is a 182-amino-acid chain: UPF0316 protein lp_1140 (182 aa).

3 helical membrane-spanning segments follow: residues methionine 1–leucine 21, phenylalanine 36–leucine 56, and proline 62–isoleucine 82.

This sequence belongs to the UPF0316 family.

It localises to the cell membrane. The polypeptide is UPF0316 protein lp_1140 (Lactiplantibacillus plantarum (strain ATCC BAA-793 / NCIMB 8826 / WCFS1) (Lactobacillus plantarum)).